A 299-amino-acid polypeptide reads, in one-letter code: Protease HtpX homolog (299 aa).

2 consecutive transmembrane segments (helical) span residues 15–35 (ILLL…GYLF) and 39–59 (GLGG…SMIF). Histidine 143 contacts Zn(2+). The active site involves glutamate 144. Position 147 (histidine 147) interacts with Zn(2+). Transmembrane regions (helical) follow at residues 158–178 (IAVA…RMMW) and 198–218 (IIML…ATLV). Glutamate 227 is a Zn(2+) binding site.

This sequence belongs to the peptidase M48B family. Zn(2+) serves as cofactor.

Its subcellular location is the cell membrane. This chain is Protease HtpX homolog, found in Streptococcus pneumoniae (strain P1031).